Here is a 485-residue protein sequence, read N- to C-terminus: MDVSKVTTSDGGGDSMETKPSPQPQPAAILSSNAPPPFLSKTYDMVDDHNTDSIVSWSANNNSFIVWKPPEFARDLLPKNFKHNNFSSFVRQLNTYGFRKVDPDRWEFANEGFLRGQKHLLQSITRRKPAHGQGQGHQRSQHSNGQNSSVSACVEVGKFGLEEEVERLKRDKNVLMQELVRLRQQQQSTDNQLQTMVQRLQGMENRQQQLMSFLAKAVQSPHFLSQFLQQQNQQNESNRRISDTSKKRRFKRDGIVRNNDSATPDGQIVKYQPPMHEQAKAMFKQLMKMEPYKTGDDGFLLGNGTSTTEGTEMETSSNQVSGITLKEMPTASEIQSSSPIETTPENVSAASEATENCIPSPDDLTLPDFTHMLPENNSEKPPESFMEPNLGGSSPLLDPDLLIDDSLSFDIDDFPMDSDIDPVDYGLLERLLMSSPVPDNMDSTPVDNETEQEQNGWDKTKHMDNLTQQMGLLSPETLDLSRQNP.

Disordered regions lie at residues Met1 to Ala34 and Arg126 to Ser149. The DNA-binding element occupies Pro35–Pro129. A compositionally biased stretch (low complexity) spans Gly136 to Gln146. Positions Ala152–Val218 are hydrophobic repeat HR-A/B. 2 disordered regions span residues Gln229–Val269 and Pro436–Lys461. The Bipartite nuclear localization signal motif lies at Asn238 to Arg252. Positions Met441–Asn455 are enriched in polar residues. The Nuclear export signal motif lies at Leu472–Leu480.

Belongs to the HSF family. Class A subfamily. Homotrimer. Interacts with HSP90-2. Exhibits temperature-dependent phosphorylation.

It localises to the cytoplasm. The protein resides in the nucleus. Functionally, transcriptional regulator that specifically binds DNA sequence 5'-AGAAnnTTCT-3' known as heat shock promoter elements (HSE). The polypeptide is Heat stress transcription factor A-1d (HSFA1D) (Arabidopsis thaliana (Mouse-ear cress)).